The primary structure comprises 739 residues: Phosphoribosylformylglycinamidine synthase subunit PurL (739 aa).

The active site involves H55. Y58 and K97 together coordinate ATP. A Mg(2+)-binding site is contributed by E99. Residues 100–103 (SHNH) and R122 each bind substrate. The active-site Proton acceptor is the H101. D123 lines the Mg(2+) pocket. Q246 contacts substrate. A Mg(2+)-binding site is contributed by D276. Position 320-322 (320-322 (ESQ)) interacts with substrate. Positions 502 and 539 each coordinate ATP. N540 is a binding site for Mg(2+). S542 is a substrate binding site.

This sequence belongs to the FGAMS family. Monomer. Part of the FGAM synthase complex composed of 1 PurL, 1 PurQ and 2 PurS subunits.

The protein localises to the cytoplasm. It carries out the reaction N(2)-formyl-N(1)-(5-phospho-beta-D-ribosyl)glycinamide + L-glutamine + ATP + H2O = 2-formamido-N(1)-(5-O-phospho-beta-D-ribosyl)acetamidine + L-glutamate + ADP + phosphate + H(+). Its pathway is purine metabolism; IMP biosynthesis via de novo pathway; 5-amino-1-(5-phospho-D-ribosyl)imidazole from N(2)-formyl-N(1)-(5-phospho-D-ribosyl)glycinamide: step 1/2. Its function is as follows. Part of the phosphoribosylformylglycinamidine synthase complex involved in the purines biosynthetic pathway. Catalyzes the ATP-dependent conversion of formylglycinamide ribonucleotide (FGAR) and glutamine to yield formylglycinamidine ribonucleotide (FGAM) and glutamate. The FGAM synthase complex is composed of three subunits. PurQ produces an ammonia molecule by converting glutamine to glutamate. PurL transfers the ammonia molecule to FGAR to form FGAM in an ATP-dependent manner. PurS interacts with PurQ and PurL and is thought to assist in the transfer of the ammonia molecule from PurQ to PurL. This chain is Phosphoribosylformylglycinamidine synthase subunit PurL, found in Lactiplantibacillus plantarum (strain ATCC BAA-793 / NCIMB 8826 / WCFS1) (Lactobacillus plantarum).